Consider the following 642-residue polypeptide: Zinc finger protein 14 (642 aa).

Residues 4–76 (VSFEDVAVNF…MVERLCESRK (73 aa)) form the KRAB domain. The tract at residues 77-99 (GSKCGETTSQMPNVNINKETSTG) is disordered. Residues 81–99 (GETTSQMPNVNINKETSTG) show a composition bias toward polar residues. The C2H2-type 1 zinc finger occupies 103-125 (HECSFCGKDFMHHSSLNRHMRSH). Residues 141–163 (CKRKAVGKTFSYRHCVRKHERTH) form a C2H2-type 2; degenerate zinc finger. A C2H2-type 3 zinc finger spans residues 169–191 (YECKQCGKAFIYYQPFQRHERIH). The segment at 197-217 (YECKQCGKTFIYYQSFQKHAH) adopts a C2H2-type 4; atypical zinc-finger fold. 15 C2H2-type zinc fingers span residues 223 to 245 (YECK…ERTH), 251 to 273 (YECK…ERTH), 279 to 301 (YKCK…KRTH), 307 to 329 (YECK…VITH), 335 to 357 (YKCK…ERTH), 363 to 385 (YECK…ERTH), 391 to 413 (YECK…ETTH), 419 to 441 (YECK…ERTH), 447 to 469 (YECK…ERSH), 475 to 497 (YECK…ERTH), 503 to 525 (YECK…EKIH), 531 to 553 (FECK…ERTH), 559 to 581 (YQCK…ERTH), 587 to 609 (YRCK…ERSH), and 615 to 637 (YECK…ERTH).

Belongs to the krueppel C2H2-type zinc-finger protein family.

The protein localises to the nucleus. May be involved in transcriptional regulation. The polypeptide is Zinc finger protein 14 (ZNF14) (Macaca fascicularis (Crab-eating macaque)).